The primary structure comprises 156 residues: Large ribosomal subunit protein uL11 (156 aa).

Residues 1-20 form a disordered region; the sequence is MAQSVKTMVEGGKATTGPPI.

Belongs to the universal ribosomal protein uL11 family. As to quaternary structure, part of the ribosomal stalk of the 50S ribosomal subunit. Interacts with L10 and the large rRNA to form the base of the stalk. L10 forms an elongated spine to which L12 dimers bind in a sequential fashion forming a multimeric L10(L12)X complex.

In terms of biological role, forms part of the ribosomal stalk which helps the ribosome interact with GTP-bound translation factors. The polypeptide is Large ribosomal subunit protein uL11 (Thermoplasma acidophilum (strain ATCC 25905 / DSM 1728 / JCM 9062 / NBRC 15155 / AMRC-C165)).